The chain runs to 374 residues: MAKRDYYEVLGVNLNATEAEVKKAFRRLAMKYHPDRNPGDKDAEVKFKEAREAYEVLCDSRKRASYDQFGHAGVEQTFGGAGAGGFGFGDLGDIFGDIFGDIFGGARGGQAREQRGADLAYELVLSLEEAVHGLSRTIKVPTWINCKTCNGSGAKGSSPATCPRCNGSGQMRMQHGFLQVQQTCSVCRGRGQVIKDPCTDCHGQGRQQQTKTLSVKIPPGIDTGDRIRLAGEGEAGLFGAPPGDLYVQVRVKPHPLFHREGNDLHSEVPIDFTTAALGGEMEIPTLDGSVRLTIPPETQGGKQFRLRGKGVKALRSGAVGDLICHIVVETPVKLSPEQKDYLKQFAELLKKDEKNHSPRTRNWFDSVKDFFTSK.

Residues 5–70 form the J domain; the sequence is DYYEVLGVNL…RKRASYDQFG (66 aa). The segment at 133–210 adopts a CR-type zinc-finger fold; the sequence is GLSRTIKVPT…CHGQGRQQQT (78 aa). Zn(2+) contacts are provided by Cys146, Cys149, Cys162, Cys165, Cys184, Cys187, Cys198, and Cys201. CXXCXGXG motif repeat units follow at residues 146–153, 162–169, 184–191, and 198–205; these read CKTCNGSG, CPRCNGSG, CSVCRGRG, and CTDCHGQG.

The protein belongs to the DnaJ family. As to quaternary structure, homodimer. Zn(2+) is required as a cofactor.

It localises to the cytoplasm. In terms of biological role, participates actively in the response to hyperosmotic and heat shock by preventing the aggregation of stress-denatured proteins and by disaggregating proteins, also in an autonomous, DnaK-independent fashion. Unfolded proteins bind initially to DnaJ; upon interaction with the DnaJ-bound protein, DnaK hydrolyzes its bound ATP, resulting in the formation of a stable complex. GrpE releases ADP from DnaK; ATP binding to DnaK triggers the release of the substrate protein, thus completing the reaction cycle. Several rounds of ATP-dependent interactions between DnaJ, DnaK and GrpE are required for fully efficient folding. Also involved, together with DnaK and GrpE, in the DNA replication of plasmids through activation of initiation proteins. This is Chaperone protein DnaJ from Coxiella burnetii (strain RSA 493 / Nine Mile phase I).